The chain runs to 298 residues: N-acetylmuramic acid 6-phosphate etherase (298 aa).

Residues 55–218 enclose the SIS domain; sequence IHAQVSGGGR…STGLMIKSGK (164 aa). Residue glutamate 83 is the Proton donor of the active site. Glutamate 114 is an active-site residue.

Belongs to the GCKR-like family. MurNAc-6-P etherase subfamily. As to quaternary structure, homodimer.

The catalysed reaction is N-acetyl-D-muramate 6-phosphate + H2O = N-acetyl-D-glucosamine 6-phosphate + (R)-lactate. It participates in amino-sugar metabolism; 1,6-anhydro-N-acetylmuramate degradation. Its pathway is amino-sugar metabolism; N-acetylmuramate degradation. The protein operates within cell wall biogenesis; peptidoglycan recycling. In terms of biological role, specifically catalyzes the cleavage of the D-lactyl ether substituent of MurNAc 6-phosphate, producing GlcNAc 6-phosphate and D-lactate. Together with AnmK, is also required for the utilization of anhydro-N-acetylmuramic acid (anhMurNAc) either imported from the medium or derived from its own cell wall murein, and thus plays a role in cell wall recycling. In Escherichia fergusonii (strain ATCC 35469 / DSM 13698 / CCUG 18766 / IAM 14443 / JCM 21226 / LMG 7866 / NBRC 102419 / NCTC 12128 / CDC 0568-73), this protein is N-acetylmuramic acid 6-phosphate etherase.